A 151-amino-acid chain; its full sequence is Arginine repressor (151 aa).

Belongs to the ArgR family.

It localises to the cytoplasm. Its pathway is amino-acid biosynthesis; L-arginine biosynthesis [regulation]. Functionally, regulates arginine biosynthesis genes. This chain is Arginine repressor, found in Pelotomaculum thermopropionicum (strain DSM 13744 / JCM 10971 / SI).